The chain runs to 124 residues: Small ribosomal subunit protein uS12 (124 aa).

Residue Asp89 is modified to 3-methylthioaspartic acid.

It belongs to the universal ribosomal protein uS12 family. Part of the 30S ribosomal subunit. Contacts proteins S8 and S17. May interact with IF1 in the 30S initiation complex.

With S4 and S5 plays an important role in translational accuracy. Its function is as follows. Interacts with and stabilizes bases of the 16S rRNA that are involved in tRNA selection in the A site and with the mRNA backbone. Located at the interface of the 30S and 50S subunits, it traverses the body of the 30S subunit contacting proteins on the other side and probably holding the rRNA structure together. The combined cluster of proteins S8, S12 and S17 appears to hold together the shoulder and platform of the 30S subunit. This is Small ribosomal subunit protein uS12 from Moorella thermoacetica (strain ATCC 39073 / JCM 9320).